We begin with the raw amino-acid sequence, 760 residues long: Endoplasmin homolog (760 aa).

Residues 1–23 (MRFLLVGFVALLAVSAFIPNVYA) form the signal peptide. ATP-binding residues include Asn-95, Asp-137, Asn-150, and Phe-187. Asn-95 carries an N-linked (GlcNAc...) asparagine glycan. An N-linked (GlcNAc...) asparagine glycan is attached at Asn-423. The segment at 727-760 (SQDAQVETEQHIEEAEPEPEAAEETTIEEEHSEL) is disordered. Acidic residues predominate over residues 741–760 (AEPEPEAAEETTIEEEHSEL). Positions 757-760 (HSEL) match the Prevents secretion from ER motif.

It belongs to the heat shock protein 90 family.

The protein resides in the endoplasmic reticulum lumen. Its function is as follows. Molecular chaperone that functions in the processing and transport of secreted proteins. This chain is Endoplasmin homolog, found in Caenorhabditis elegans.